Reading from the N-terminus, the 513-residue chain is Zinc finger CCCH-type with G patch domain-containing protein (513 aa).

Methionine 1 carries the post-translational modification N-acetylmethionine. The interval 90–131 is disordered; the sequence is EVPVAPGAELETVPSRETGPGPTERGQEEDDGEDEEGGAALS. The span at 116 to 126 shows a compositional bias: acidic residues; the sequence is QEEDDGEDEEG. The C3H1-type zinc finger occupies 176–202; sequence KSLKPCSFFLEGKCRFQENCRFSHGQV. Residues 267-296 are disordered; sequence LPPLRTEPAGSSDSDGSDADDPSYARVVEP. Phosphoserine occurs at positions 278 and 355. The G-patch domain maps to 315–361; that stretch reads TRGIGSRLLAKMGYEFGKGLGRHAEGRVEPVHAVVLPRGKSLDQCAE. Disordered stretches follow at residues 367–394 and 492–513; these read TRAG…PPPR and AQEA…MTEF. Residues 497-513 are compositionally biased toward basic and acidic residues; the sequence is LQREQRKADTHKKMTEF.

In terms of assembly, interacts with CHD4/Mi-2; the interaction is direct.

It is found in the nucleus. Transcription repressor that specifically binds the 5'-GGAG[GA]A[GA]A-3' consensus sequence. Represses transcription by recruiting the chromatin multiprotein complex NuRD to target promoters. Negatively regulates expression of EGFR, a gene involved in cell proliferation, survival and migration. Its ability to repress genes of the EGFR pathway suggest it may act as a tumor suppressor. The chain is Zinc finger CCCH-type with G patch domain-containing protein (ZGPAT) from Bos taurus (Bovine).